The primary structure comprises 417 residues: UDP-N-acetylglucosamine 1-carboxyvinyltransferase (417 aa).

22 to 23 serves as a coordination point for phosphoenolpyruvate; that stretch reads KN. Arg-92 serves as a coordination point for UDP-N-acetyl-alpha-D-glucosamine. Cys-116 functions as the Proton donor in the catalytic mechanism. The residue at position 116 (Cys-116) is a 2-(S-cysteinyl)pyruvic acid O-phosphothioketal. Residues Asp-304 and Ile-326 each contribute to the UDP-N-acetyl-alpha-D-glucosamine site.

This sequence belongs to the EPSP synthase family. MurA subfamily.

The protein localises to the cytoplasm. The catalysed reaction is phosphoenolpyruvate + UDP-N-acetyl-alpha-D-glucosamine = UDP-N-acetyl-3-O-(1-carboxyvinyl)-alpha-D-glucosamine + phosphate. The protein operates within cell wall biogenesis; peptidoglycan biosynthesis. Its function is as follows. Cell wall formation. Adds enolpyruvyl to UDP-N-acetylglucosamine. The protein is UDP-N-acetylglucosamine 1-carboxyvinyltransferase of Geobacter sulfurreducens (strain ATCC 51573 / DSM 12127 / PCA).